Reading from the N-terminus, the 202-residue chain is Glycerol-3-phosphate acyltransferase (202 aa).

A run of 6 helical transmembrane segments spans residues 2–22 (MIVI…GYVI), 54–74 (FLVT…PLWL), 88–108 (NGLI…YLGF), 120–140 (VILG…FGIL), 141–161 (YLTK…VIGA), and 162–182 (LLIR…LLII).

The protein belongs to the PlsY family. In terms of assembly, probably interacts with PlsX.

It is found in the cell membrane. It carries out the reaction an acyl phosphate + sn-glycerol 3-phosphate = a 1-acyl-sn-glycero-3-phosphate + phosphate. The protein operates within lipid metabolism; phospholipid metabolism. Catalyzes the transfer of an acyl group from acyl-phosphate (acyl-PO(4)) to glycerol-3-phosphate (G3P) to form lysophosphatidic acid (LPA). This enzyme utilizes acyl-phosphate as fatty acyl donor, but not acyl-CoA or acyl-ACP. This is Glycerol-3-phosphate acyltransferase from Staphylococcus saprophyticus subsp. saprophyticus (strain ATCC 15305 / DSM 20229 / NCIMB 8711 / NCTC 7292 / S-41).